We begin with the raw amino-acid sequence, 296 residues long: Ribosomal RNA small subunit methyltransferase H (296 aa).

Residues 30–32 (GGH), Asp-49, Phe-77, Asp-95, and Gln-102 each bind S-adenosyl-L-methionine.

It belongs to the methyltransferase superfamily. RsmH family.

The protein localises to the cytoplasm. It carries out the reaction cytidine(1402) in 16S rRNA + S-adenosyl-L-methionine = N(4)-methylcytidine(1402) in 16S rRNA + S-adenosyl-L-homocysteine + H(+). In terms of biological role, specifically methylates the N4 position of cytidine in position 1402 (C1402) of 16S rRNA. The sequence is that of Ribosomal RNA small subunit methyltransferase H from Hydrogenobaculum sp. (strain Y04AAS1).